Reading from the N-terminus, the 302-residue chain is Enoyl-CoA delta isomerase 1, mitochondrial (302 aa).

The N-terminal 41 residues, 1-41 (MALVASVRVPARVLLRAGARLPGAALGRTERAAGGGDGARR), are a transit peptide targeting the mitochondrion. Residue K61 is modified to N6-acetyllysine; alternate. K61 is subject to N6-succinyllysine; alternate. An N6-succinyllysine modification is found at K84. The residue at position 89 (K89) is an N6-acetyllysine. Substrate contacts are provided by residues 106 to 110 (AGLDL), G153, and N177. K283 carries the post-translational modification N6-acetyllysine; alternate. At K283 the chain carries N6-succinyllysine; alternate. Residue K288 is modified to N6-succinyllysine.

The protein belongs to the enoyl-CoA hydratase/isomerase family. Homotrimer. In terms of tissue distribution, expressed in liver (at protein level).

It localises to the mitochondrion matrix. It carries out the reaction a (3Z)-enoyl-CoA = a 4-saturated (2E)-enoyl-CoA. The enzyme catalyses a (3E)-enoyl-CoA = a 4-saturated (2E)-enoyl-CoA. The catalysed reaction is (3Z)-octenoyl-CoA = (2E)-octenoyl-CoA. It catalyses the reaction (2E)-tetradecenoyl-CoA = (3Z)-tetradecenoyl-CoA. It carries out the reaction (3Z)-dodecenoyl-CoA = (2E)-dodecenoyl-CoA. The enzyme catalyses (3Z)-hexenoyl-CoA = (2E)-hexenoyl-CoA. The catalysed reaction is (3Z)-decenoyl-CoA = (2E)-decenoyl-CoA. It participates in lipid metabolism; fatty acid beta-oxidation. Key enzyme of fatty acid beta-oxidation. Able to isomerize both 3-cis (3Z) and 3-trans (3E) double bonds into the 2-trans (2E) form in a range of enoyl-CoA species, with a preference for (3Z)-enoyl-CoAs over (3E)-enoyl-CoAs. The catalytic efficiency of this enzyme is not affected by the fatty acyl chain length. The protein is Enoyl-CoA delta isomerase 1, mitochondrial (ECI1) of Homo sapiens (Human).